A 404-amino-acid chain; its full sequence is Glycosylated lysosomal membrane protein (404 aa).

The first 35 residues, 1-35 (MFRCWGPHWGWVPCAPTPWLLLSLLVCSAPFGLQG), serve as a signal peptide directing secretion. Topologically, residues 36–370 (EETRQVSMEV…VDIFSPLVLG (335 aa)) are lumenal. N-linked (GlcNAc...) asparagine glycosylation is found at Asn64, Asn85, Asn94, Asn133, Asn157, Asn166, Asn185, Asn228, and Asn331. A helical membrane pass occupies residues 371-391 (IMAVALGAPGLMFLGGGLFLL). At 392–404 (LRHRRYSEYQSIN) the chain is on the cytoplasmic side. A Lysosomal targeting motif motif is present at residues 400-404 (YQSIN).

Belongs to the GLMP family. As to quaternary structure, interacts (via lumenal domain) with lysosomal protein MFSD1; the interaction starts while both proteins are still in the endoplasmic reticulum and is required for stabilization of MFSD1 in lysosomes but has no direct effect on its targeting to lysosomes or transporter activity. Highly N-glycosylated. N-glycosylation is essential for GLMP stability and for MFSD1 lysosomal localization. In terms of tissue distribution, detected in brain, heart, liver, kidney, lung, intestine, testis and spleen. Expressed at highest levels in kidney cortex. However, another study reports highest expression levels in lung. Expressed in myoblasts with expression increasing during differentiation into myotubes.

It localises to the lysosome membrane. In terms of biological role, required to protect lysosomal transporter MFSD1 from lysosomal proteolysis and for MFSD1 lysosomal localization. The polypeptide is Glycosylated lysosomal membrane protein (Mus musculus (Mouse)).